Consider the following 410-residue polypeptide: Peptidase T (410 aa).

Residue His-79 coordinates Zn(2+). The active site involves Asp-81. Residue Asp-142 participates in Zn(2+) binding. The Proton acceptor role is filled by Glu-176. Zn(2+) contacts are provided by Glu-177, Asp-199, and His-381.

The protein belongs to the peptidase M20B family. It depends on Zn(2+) as a cofactor.

The protein resides in the cytoplasm. The catalysed reaction is Release of the N-terminal residue from a tripeptide.. Its function is as follows. Cleaves the N-terminal amino acid of tripeptides. The polypeptide is Peptidase T (Bacillus cereus (strain ATCC 10987 / NRS 248)).